Consider the following 93-residue polypeptide: Small ribosomal subunit protein bS6 (93 aa).

The protein belongs to the bacterial ribosomal protein bS6 family.

Functionally, binds together with bS18 to 16S ribosomal RNA. The sequence is that of Small ribosomal subunit protein bS6 (rpsF) from Treponema pallidum (strain Nichols).